A 434-amino-acid chain; its full sequence is Probable exopolygalacturonase X (434 aa).

The N-terminal stretch at 1 to 23 (MKFLHTVAQTATLLLSLGASVEG) is a signal peptide. The segment at 35 to 54 (HHPFRPLPASTPRTKTCHVR) is disordered. 3 N-linked (GlcNAc...) asparagine glycosylation sites follow: Asn113, Asn129, and Asn199. The stretch at 231–252 (SSNIVIQNSVVNNGDDCVSFKP) is one PbH1 1 repeat. Asp245 functions as the Proton donor in the catalytic mechanism. Cys247 and Cys264 are oxidised to a cystine. N-linked (GlcNAc...) asparagine glycosylation is found at Asn253 and Asn265. One copy of the PbH1 2 repeat lies at 254-274 (STDILVQNMHCNGSHGISVGS). His268 is an active-site residue. N-linked (GlcNAc...) asparagine glycans are attached at residues Asn292, Asn297, Asn329, Asn354, and Asn364. A PbH1 3 repeat occupies 327–348 (VSNITYDRMYIENVDWAIEVTQ). The PbH1 4 repeat unit spans residues 362 to 394 (PSNLTISDVHIKNMWGTTSGKRDPNVGTIVCSS). An intrachain disulfide couples Cys392 to Cys398. Residues Asn407 and Asn430 are each glycosylated (N-linked (GlcNAc...) asparagine).

The protein belongs to the glycosyl hydrolase 28 family.

The protein localises to the secreted. It carries out the reaction [(1-&gt;4)-alpha-D-galacturonosyl](n) + H2O = alpha-D-galacturonate + [(1-&gt;4)-alpha-D-galacturonosyl](n-1). Its function is as follows. Specific in hydrolyzing the terminal glycosidic bond of polygalacturonic acid and oligogalacturonates. This Aspergillus terreus (strain NIH 2624 / FGSC A1156) protein is Probable exopolygalacturonase X (pgaX).